A 189-amino-acid polypeptide reads, in one-letter code: GTPase HRas (189 aa).

Met-1 carries the post-translational modification N-acetylmethionine. An N-acetylthreonine; in GTPase HRas, N-terminally processed modification is found at Thr-2. 10–17 is a binding site for GTP; it reads GAGGVGKS. Positions 32–40 match the Effector region motif; sequence YDPTIEDSY. GTP is bound by residues 57–61 and 116–119; these read DTAGQ and NKCD. Cys-118 carries the S-nitrosocysteine modification. The hypervariable region stretch occupies residues 166-185; the sequence is HKLRKLNPPDESGPGCMNCK. S-palmitoyl cysteine attachment occurs at residues Cys-181 and Cys-184. Cys-186 is subject to Cysteine methyl ester. Cys-186 is lipidated: S-farnesyl cysteine. A propeptide spans 187 to 189 (removed in mature form); the sequence is VIS.

Belongs to the small GTPase superfamily. Ras family. Palmitoylated by the ZDHHC9-GOLGA7 complex. A continuous cycle of de- and re-palmitoylation regulates rapid exchange between plasma membrane and Golgi.

It localises to the cell membrane. The protein localises to the golgi apparatus membrane. The enzyme catalyses GTP + H2O = GDP + phosphate + H(+). Alternates between an inactive form bound to GDP and an active form bound to GTP. Activated by a guanine nucleotide-exchange factor (GEF) and inactivated by a GTPase-activating protein (GAP). Ras proteins bind GDP/GTP and possess intrinsic GTPase activity. This is GTPase HRas (HRAS) from Gallus gallus (Chicken).